The following is a 131-amino-acid chain: Profilin-6 (131 aa).

A disulfide bridge connects residues Cys13 and Cys115. The short motif at 81–97 is the Involved in PIP2 interaction element; that stretch reads VVIRGKKGAGGITIKKT. At Thr111 the chain carries Phosphothreonine.

This sequence belongs to the profilin family. As to quaternary structure, occurs in many kinds of cells as a complex with monomeric actin in a 1:1 ratio. In terms of processing, phosphorylated by MAP kinases.

It is found in the cytoplasm. It localises to the cytoskeleton. Functionally, binds to actin and affects the structure of the cytoskeleton. At high concentrations, profilin prevents the polymerization of actin, whereas it enhances it at low concentrations. The protein is Profilin-6 of Corylus avellana (European hazel).